Here is a 337-residue protein sequence, read N- to C-terminus: MNTEATHDQNEALTTGARLRNAREQLGLSQQAVAERLCLKVSTVRDIEEDKAPADLASTFLRGYIRSYARLVHIPEEELLPGLEKQAPLRAAKVAPMQSFSLGKRRKKRDGWLMTFTWLVLFVVIGLSGAWWWQDHKAQQEEITTMADQSSAELSSNSEQGQSVPLNTSTTTDPATTSTPPASVDTTATNTQTPAVTAPAPAVDPQQNAVVSPSQANVDTAATPAPTAATTPDGAAPLPTDQAGVTTPVADPNALVMNFTADCWLEVTDATGKKLFSGMQRKDGNLNLTGQAPYKLKIGAPAAVQIQYQGKPVDLSRFIRTNQVARLTLNAEQSPAQ.

Over 1-111 (MNTEATHDQN…LGKRRKKRDG (111 aa)) the chain is Cytoplasmic. An HTH cro/C1-type domain is found at 19 to 71 (LRNAREQLGLSQQAVAERLCLKVSTVRDIEEDKAPADLASTFLRGYIRSYARL). A DNA-binding region (H-T-H motif) is located at residues 30-49 (QQAVAERLCLKVSTVRDIEE). A helical; Signal-anchor for type II membrane protein transmembrane segment spans residues 112-132 (WLMTFTWLVLFVVIGLSGAWW). Over 133–337 (WQDHKAQQEE…TLNAEQSPAQ (205 aa)) the chain is Periplasmic. Residues 145–167 (TMADQSSAELSSNSEQGQSVPLN) are compositionally biased toward polar residues. Residues 145–236 (TMADQSSAEL…TAATTPDGAA (92 aa)) form a disordered region. Residues 168-207 (TSTTTDPATTSTPPASVDTTATNTQTPAVTAPAPAVDPQQ) show a composition bias toward low complexity. The span at 208-218 (NAVVSPSQANV) shows a compositional bias: polar residues. The span at 219–236 (DTAATPAPTAATTPDGAA) shows a compositional bias: low complexity.

It belongs to the RodZ family.

The protein resides in the cell inner membrane. Functionally, cytoskeletal protein that is involved in cell-shape control through regulation of the length of the long axis. This Escherichia coli O9:H4 (strain HS) protein is Cytoskeleton protein RodZ.